Here is a 683-residue protein sequence, read N- to C-terminus: Probable serine/threonine-protein kinase HAL5-like (683 aa).

2 disordered regions span residues 1–90 (MPQQ…VSDE) and 157–200 (YPQN…SKKA). The segment covering 36-48 (PSSAATSDSSEMS) has biased composition (low complexity). Residues 50–60 (AQGGRGNGLLG) show a composition bias toward gly residues. A compositionally biased stretch (polar residues) spans 69-85 (SPKSEAQFTQRNKSAES). The region spanning 364 to 670 (GKCIGMIGQG…IPKLLDTPWM (307 aa)) is the Protein kinase domain. Residues 370 to 378 (IGQGAYGTV) and Lys411 contribute to the ATP site. The Proton acceptor role is filled by Asp521.

The protein belongs to the protein kinase superfamily. CAMK Ser/Thr protein kinase family. NPR/HAL subfamily. HAL5 sub-subfamily.

It carries out the reaction L-seryl-[protein] + ATP = O-phospho-L-seryl-[protein] + ADP + H(+). The enzyme catalyses L-threonyl-[protein] + ATP = O-phospho-L-threonyl-[protein] + ADP + H(+). This Eremothecium gossypii (strain ATCC 10895 / CBS 109.51 / FGSC 9923 / NRRL Y-1056) (Yeast) protein is Probable serine/threonine-protein kinase HAL5-like.